The chain runs to 188 residues: Mitochondrial import receptor subunit TOM20-1 (188 aa).

Residues 1–164 (MDKLNFFEEI…VVKNKKSSDE (164 aa)) are Cytoplasmic-facing. Residues 165–182 (KYIVMGWVILAIGVVACI) form a helical membrane-spanning segment. Residues 183–188 (SFRKLR) are Mitochondrial intermembrane-facing.

The protein belongs to the Tom20 family. Forms part of the preprotein translocase complex of the outer mitochondrial membrane (TOM complex) which consists of at least 6 different proteins (TOM5, TOM6, TOM7, TOM20, TOM22/TOM9 and TOM40). Component of a mitochondrial large protein complex that contains, at least, MIC60, DGS1, TOM40, TOM20 proteins, and petC/RISP. In terms of tissue distribution, barely detected in roots.

The protein localises to the mitochondrion outer membrane. Its function is as follows. Central component of the receptor complex responsible for the recognition and translocation of cytosolically synthesized mitochondrial preproteins. Together with TOM22 functions as the transit peptide receptor at the surface of the mitochondrion outer membrane and facilitates the movement of preproteins into the translocation pore. In Arabidopsis thaliana (Mouse-ear cress), this protein is Mitochondrial import receptor subunit TOM20-1.